Here is a 256-residue protein sequence, read N- to C-terminus: 1-(5-phosphoribosyl)-5-[(5-phosphoribosylamino)methylideneamino] imidazole-4-carboxamide isomerase (256 aa).

Asp-8 functions as the Proton acceptor in the catalytic mechanism. Asp-129 acts as the Proton donor in catalysis.

Belongs to the HisA/HisF family.

It is found in the cytoplasm. It catalyses the reaction 1-(5-phospho-beta-D-ribosyl)-5-[(5-phospho-beta-D-ribosylamino)methylideneamino]imidazole-4-carboxamide = 5-[(5-phospho-1-deoxy-D-ribulos-1-ylimino)methylamino]-1-(5-phospho-beta-D-ribosyl)imidazole-4-carboxamide. It functions in the pathway amino-acid biosynthesis; L-histidine biosynthesis; L-histidine from 5-phospho-alpha-D-ribose 1-diphosphate: step 4/9. The sequence is that of 1-(5-phosphoribosyl)-5-[(5-phosphoribosylamino)methylideneamino] imidazole-4-carboxamide isomerase from Synechococcus sp. (strain CC9311).